The primary structure comprises 609 residues: DNA-directed RNA polymerase subunit beta' (609 aa).

The Zn(2+) site is built by Cys67, Cys69, Cys82, and Cys85. Residues Asp460, Asp462, and Asp464 each contribute to the Mg(2+) site.

It belongs to the RNA polymerase beta' chain family. RpoC1 subfamily. As to quaternary structure, in plastids the minimal PEP RNA polymerase catalytic core is composed of four subunits: alpha, beta, beta', and beta''. When a (nuclear-encoded) sigma factor is associated with the core the holoenzyme is formed, which can initiate transcription. The cofactor is Mg(2+). Zn(2+) serves as cofactor.

The protein localises to the plastid. Its subcellular location is the chloroplast. It catalyses the reaction RNA(n) + a ribonucleoside 5'-triphosphate = RNA(n+1) + diphosphate. Functionally, DNA-dependent RNA polymerase catalyzes the transcription of DNA into RNA using the four ribonucleoside triphosphates as substrates. The protein is DNA-directed RNA polymerase subunit beta' of Emiliania huxleyi (Coccolithophore).